The sequence spans 744 residues: Catalase-peroxidase 3 (744 aa).

Positions 106–228 form a cross-link, tryptophyl-tyrosyl-methioninium (Trp-Tyr) (with M-254); that stretch reads WHFAGTYRIG…LAASEMGLIY (123 aa). Residue His107 is the Proton acceptor of the active site. The tryptophyl-tyrosyl-methioninium (Tyr-Met) (with W-106) cross-link spans 228–254; sequence YVDPQGPATLPDPLASARDIRETFRRM. His269 lines the heme b pocket.

The protein belongs to the peroxidase family. Peroxidase/catalase subfamily. Homodimer or homotetramer. Heme b serves as cofactor. In terms of processing, formation of the three residue Trp-Tyr-Met cross-link is important for the catalase, but not the peroxidase activity of the enzyme.

It carries out the reaction H2O2 + AH2 = A + 2 H2O. It catalyses the reaction 2 H2O2 = O2 + 2 H2O. Its function is as follows. Bifunctional enzyme with both catalase and broad-spectrum peroxidase activity. This is Catalase-peroxidase 3 from Mycolicibacterium smegmatis (strain ATCC 700084 / mc(2)155) (Mycobacterium smegmatis).